We begin with the raw amino-acid sequence, 100 residues long: uncharacterized protein (100 aa).

The protein resides in the cytoplasm. It is found in the endoplasmic reticulum. This is an uncharacterized protein from Schizosaccharomyces pombe (strain 972 / ATCC 24843) (Fission yeast).